Consider the following 216-residue polypeptide: MVDITAAELRAAEKIFGDRLDLAKRYVEHLATSGTERGLIGPREIPRLWSRHVLNCAVIESEIPQGSRVADVGSGAGLPGLCLAIARPDLELTLIEPLERRVIWLQEVVDDLGLDNVTVMRSRAELAVGHVEADVVTARAVSALTNLAGLTIPLLGGTGEVIAIKGRSAGEEIEKAAKAIRKLGGVETSVLTVGDNLLEEPTTVVRIVVNKPQKKS.

Residues Gly-73, Leu-78, 124–125 (AE), and Arg-139 contribute to the S-adenosyl-L-methionine site.

It belongs to the methyltransferase superfamily. RNA methyltransferase RsmG family.

It localises to the cytoplasm. Its function is as follows. Specifically methylates the N7 position of guanine in position 518 of 16S rRNA. This chain is Ribosomal RNA small subunit methyltransferase G, found in Pseudarthrobacter chlorophenolicus (strain ATCC 700700 / DSM 12829 / CIP 107037 / JCM 12360 / KCTC 9906 / NCIMB 13794 / A6) (Arthrobacter chlorophenolicus).